Reading from the N-terminus, the 266-residue chain is 5'-nucleotidase SurE (266 aa).

The a divalent metal cation site is built by aspartate 8, aspartate 9, serine 42, and asparagine 98.

This sequence belongs to the SurE nucleotidase family. A divalent metal cation serves as cofactor.

The protein localises to the cytoplasm. The catalysed reaction is a ribonucleoside 5'-phosphate + H2O = a ribonucleoside + phosphate. Functionally, nucleotidase that shows phosphatase activity on nucleoside 5'-monophosphates. This is 5'-nucleotidase SurE from Methanocaldococcus jannaschii (strain ATCC 43067 / DSM 2661 / JAL-1 / JCM 10045 / NBRC 100440) (Methanococcus jannaschii).